The chain runs to 133 residues: DNA-directed RNA polymerase subunit omega (133 aa).

The protein belongs to the RNA polymerase subunit omega family. The RNAP catalytic core consists of 2 alpha, 1 beta, 1 beta' and 1 omega subunit. When a sigma factor is associated with the core the holoenzyme is formed, which can initiate transcription.

It carries out the reaction RNA(n) + a ribonucleoside 5'-triphosphate = RNA(n+1) + diphosphate. In terms of biological role, promotes RNA polymerase assembly. Latches the N- and C-terminal regions of the beta' subunit thereby facilitating its interaction with the beta and alpha subunits. The polypeptide is DNA-directed RNA polymerase subunit omega (Brucella abortus (strain S19)).